Consider the following 428-residue polypeptide: UPF0053 inner membrane protein YfjD (428 aa).

The Cytoplasmic segment spans residues 1-3; that stretch reads MEH. The CNNM transmembrane domain occupies 2-192; that stretch reads EHISTTTLII…SQISRRNQDM (191 aa). A helical membrane pass occupies residues 4 to 24; it reads ISTTTLIIILIIMVVISAYFS. The Periplasmic portion of the chain corresponds to 25–64; it reads GSETGMMTLNRYRLRHMAKQGNRSAKRVEKLLRKPDRLIS. Residues 65-85 form a helical membrane-spanning segment; the sequence is LVLIGNNLVNILASALGTIVG. Residues 86–91 lie on the Cytoplasmic side of the membrane; it reads MRLYGD. A helical transmembrane segment spans residues 92-112; sequence AGVAIATGVLTFVVLVFAEVL. Residues 113–129 are Periplasmic-facing; sequence PKTIAALYPEKVAYPSS. A helical transmembrane segment spans residues 130–150; that stretch reads FLLAPLQILMMPLVWLLNAIT. Over 151-428 the chain is Cytoplasmic; it reads RMLMRMMGIK…VKPLRESVAE (278 aa). CBS domains lie at 208–270 and 272–332; these read MVPR…FTKE and MLRA…FTTS.

It belongs to the UPF0053 family.

The protein resides in the cell inner membrane. The sequence is that of UPF0053 inner membrane protein YfjD (yfjD) from Escherichia coli (strain K12).